A 261-amino-acid polypeptide reads, in one-letter code: Cytochrome c oxidase subunit 3 (261 aa).

Residues 1–15 lie on the Mitochondrial matrix side of the membrane; it reads MAHQAHAYHMVDPSP. Residues 16 to 34 form a helical membrane-spanning segment; that stretch reads WPLTGAIGALFLTSGLAIW. The Mitochondrial intermembrane segment spans residues 35–40; the sequence is FHFQSV. Residues 41–66 traverse the membrane as a helical segment; sequence TLLTLGLILLLLTMYQWWRDIIREGT. Over 67–72 the chain is Mitochondrial matrix; it reads FQGHHT. Residues 73–105 traverse the membrane as a helical segment; sequence PPVQKGLRYGMILFITSEVFFFLGFFWAFYHSS. Over 106-128 the chain is Mitochondrial intermembrane; the sequence is LAPTPELGGCWPPTGITPLDPFE. The chain crosses the membrane as a helical span at residues 129 to 152; sequence VPLLNTAVLLASGVTVTWAHHSLM. The Mitochondrial matrix portion of the chain corresponds to 153–155; that stretch reads EGA. Residues 156-183 form a helical membrane-spanning segment; the sequence is RKQAIQALALTIILGVYFTALQAMEYYE. The Mitochondrial intermembrane portion of the chain corresponds to 184–190; sequence APFTIAD. Residues 191–223 traverse the membrane as a helical segment; it reads GVYGSTFFVATGFHGLHVIIGSSFLAVCLLRQI. Topologically, residues 224–232 are mitochondrial matrix; it reads QYHFTSEHH. Residues 233 to 256 form a helical membrane-spanning segment; sequence FGFEAAAWYWHFVDVVWLFLYVSI. The Mitochondrial intermembrane portion of the chain corresponds to 257 to 261; sequence YWWGS.

It belongs to the cytochrome c oxidase subunit 3 family. As to quaternary structure, component of the cytochrome c oxidase (complex IV, CIV), a multisubunit enzyme composed of 14 subunits. The complex is composed of a catalytic core of 3 subunits MT-CO1, MT-CO2 and MT-CO3, encoded in the mitochondrial DNA, and 11 supernumerary subunits COX4I, COX5A, COX5B, COX6A, COX6B, COX6C, COX7A, COX7B, COX7C, COX8 and NDUFA4, which are encoded in the nuclear genome. The complex exists as a monomer or a dimer and forms supercomplexes (SCs) in the inner mitochondrial membrane with NADH-ubiquinone oxidoreductase (complex I, CI) and ubiquinol-cytochrome c oxidoreductase (cytochrome b-c1 complex, complex III, CIII), resulting in different assemblies (supercomplex SCI(1)III(2)IV(1) and megacomplex MCI(2)III(2)IV(2)).

The protein resides in the mitochondrion inner membrane. The enzyme catalyses 4 Fe(II)-[cytochrome c] + O2 + 8 H(+)(in) = 4 Fe(III)-[cytochrome c] + 2 H2O + 4 H(+)(out). Component of the cytochrome c oxidase, the last enzyme in the mitochondrial electron transport chain which drives oxidative phosphorylation. The respiratory chain contains 3 multisubunit complexes succinate dehydrogenase (complex II, CII), ubiquinol-cytochrome c oxidoreductase (cytochrome b-c1 complex, complex III, CIII) and cytochrome c oxidase (complex IV, CIV), that cooperate to transfer electrons derived from NADH and succinate to molecular oxygen, creating an electrochemical gradient over the inner membrane that drives transmembrane transport and the ATP synthase. Cytochrome c oxidase is the component of the respiratory chain that catalyzes the reduction of oxygen to water. Electrons originating from reduced cytochrome c in the intermembrane space (IMS) are transferred via the dinuclear copper A center (CU(A)) of subunit 2 and heme A of subunit 1 to the active site in subunit 1, a binuclear center (BNC) formed by heme A3 and copper B (CU(B)). The BNC reduces molecular oxygen to 2 water molecules using 4 electrons from cytochrome c in the IMS and 4 protons from the mitochondrial matrix. This is Cytochrome c oxidase subunit 3 (mt-co3) from Formosania lacustris (Oriental stream loach).